An 89-amino-acid chain; its full sequence is MIRKEFLVSGRVQGVGFRFFCKYQASLLSLTGYAENLDDGQVLIEVQGDESSIRKFKTKILNGNGFSRVISIDEKDLTVDTREKRFSTY.

Residues 3–89 enclose the Acylphosphatase-like domain; the sequence is RKEFLVSGRV…DTREKRFSTY (87 aa). Catalysis depends on residues Arg18 and Asn36.

Belongs to the acylphosphatase family.

It carries out the reaction an acyl phosphate + H2O = a carboxylate + phosphate + H(+). The polypeptide is Acylphosphatase (acyP) (Clostridium perfringens (strain ATCC 13124 / DSM 756 / JCM 1290 / NCIMB 6125 / NCTC 8237 / Type A)).